We begin with the raw amino-acid sequence, 492 residues long: Phosphatidylinositol-glycan biosynthesis class W protein (492 aa).

The next 5 membrane-spanning stretches (helical) occupy residues 26–46 (FILT…ATFF), 59–79 (FILE…FTEL), 82–102 (FLIV…QKNV), 127–147 (YRAF…FQVF), and 156–176 (TYGI…GALV). The interval 185–216 (IEKQQKKKREEEEDDNDKINKTSSSSSSSSSA) is disordered. N-linked (GlcNAc...) asparagine glycosylation is present at asparagine 204. Over residues 205–216 (KTSSSSSSSSSA) the composition is skewed to low complexity. Residues 264–284 (YGLHWNFFFTLGFVSISLAFL) traverse the membrane as a helical segment. A glycan (N-linked (GlcNAc...) asparagine) is linked at asparagine 289. 4 helical membrane passes run 290–310 (ISAI…NSFG), 331–351 (ICSF…GTEL), 364–384 (FATK…LCEI), and 399–419 (VLAI…ITLI). Asparagine 424 carries an N-linked (GlcNAc...) asparagine glycan. 2 helical membrane passes run 437 to 457 (LFIF…MKTI) and 464 to 484 (SMII…ILDY).

It belongs to the PIGW family.

It localises to the endoplasmic reticulum membrane. It participates in glycolipid biosynthesis; glycosylphosphatidylinositol-anchor biosynthesis. Functionally, probable acetyltransferase, which acetylates the inositol ring of phosphatidylinositol during biosynthesis of GPI-anchor. This Dictyostelium discoideum (Social amoeba) protein is Phosphatidylinositol-glycan biosynthesis class W protein.